A 403-amino-acid polypeptide reads, in one-letter code: Chalcone synthase 3 (403 aa).

Residue C170 is part of the active site.

This sequence belongs to the thiolase-like superfamily. Chalcone/stilbene synthases family.

It carries out the reaction (E)-4-coumaroyl-CoA + 3 malonyl-CoA + 3 H(+) = 2',4,4',6'-tetrahydroxychalcone + 3 CO2 + 4 CoA. It functions in the pathway secondary metabolite biosynthesis; flavonoid biosynthesis. The primary product of this enzyme is 4,2',4',6'-tetrahydroxychalcone (also termed naringenin-chalcone or chalcone) which can under specific conditions spontaneously isomerize into naringenin. The protein is Chalcone synthase 3 (CHS3) of Gerbera hybrida (Daisy).